The chain runs to 467 residues: Putative alpha-amylase (467 aa).

The Nucleophile role is filled by Glu-145.

This sequence belongs to the glycosyl hydrolase 57 family.

It catalyses the reaction Endohydrolysis of (1-&gt;4)-alpha-D-glucosidic linkages in polysaccharides containing three or more (1-&gt;4)-alpha-linked D-glucose units.. The protein is Putative alpha-amylase of Methanocaldococcus jannaschii (strain ATCC 43067 / DSM 2661 / JAL-1 / JCM 10045 / NBRC 100440) (Methanococcus jannaschii).